The following is a 699-amino-acid chain: DNA ligase (699 aa).

Residues 47-51, 96-97, and Glu128 each bind NAD(+); these read DAQYD and SL. Residue Lys130 is the N6-AMP-lysine intermediate of the active site. NAD(+)-binding residues include Arg151, Glu186, Lys303, and Lys327. 4 residues coordinate Zn(2+): Cys422, Cys425, Cys440, and Cys446. The region spanning 620–699 is the BRCT domain; the sequence is GDNLLLSNQT…EEWIKMVNEL (80 aa).

It belongs to the NAD-dependent DNA ligase family. LigA subfamily. It depends on Mg(2+) as a cofactor. Mn(2+) serves as cofactor.

The enzyme catalyses NAD(+) + (deoxyribonucleotide)n-3'-hydroxyl + 5'-phospho-(deoxyribonucleotide)m = (deoxyribonucleotide)n+m + AMP + beta-nicotinamide D-nucleotide.. Functionally, DNA ligase that catalyzes the formation of phosphodiester linkages between 5'-phosphoryl and 3'-hydroxyl groups in double-stranded DNA using NAD as a coenzyme and as the energy source for the reaction. It is essential for DNA replication and repair of damaged DNA. The sequence is that of DNA ligase from Orientia tsutsugamushi (strain Ikeda) (Rickettsia tsutsugamushi).